A 1264-amino-acid chain; its full sequence is MMRKYLILLILLPALAVGIIPDVTTTVGDMVDTSYLIVNCRADIGTQELPPTKLELSSDKIKFTATDLSSTSTQACERSIVVTKTGLNILRVAGVDEFGYTAEAIDENKYIASCVINDEDKINRVLRIKITHPAMFDYTEWVCKTTASDGVETTARGGIDTGAILFDFENSDMELRTNGMKKDKKTLPMTFDCLIDGPFKTVIKQEIYGHKLPLFGVDMVLKKGNGDTSRIRGELFGRNKIDIDETPPLDDFTIRKESDLCGDTTRLKEITLAATNNNEFAANNIVIFLNTGFTNDDNSRTNYHNDQKKENAVLDPYRELLKTECFGRHTKTMVTTPINQLQHDTQCFRYDFIGSAQFISDNGHILAGVNKLSLHGGLINPTEEYDLTLNWEEDMDFQTERILLEMPSKIGAIYTGVRTGMPLRVVIPTHNLISDLYKEVAEAMVSFNRMEIKMLKLDQNKIAEVSCNSHKPFFYKAIVIMQKGCWIDTIDAPSRCLNTDDNRAFKVVTIEDYTFYLRRKIHSQYRDAVYGRDMDYRCMGSYYYCFSDYRRYNKLRDMVVVEQPIDTKLTNTILAASNAKYSSECVQDNVENLVQADFNVKGYTDGIADNLITHINTDLNMGSTMARKFPIAEITNSDVKCHCGQVVNTCNRYSFTNAINTLGTIYQPNTFPLVLTGSNNRESTMWCESMGFRSPIKKAKIMAANFACGGSTTPFIDFSDDLLNYLPTPIFTTVKDLTAAPEKRYIIECKDIPTACLSESSISINIIMDWIYDPPKTQSELGLDSEPEATGKTYKSKRVIWQKTNGPIFGGEFKIERASFYTNAFTNQPELYKNTVLPEDELFDYISDGYTHTFFKTYFPENEIKPTSATCSYGKINILKTATITDFSSWITTDKQVLCTGSNYQYNVKRIGNKIFTTDVTWPNDCPSVDNVKIELLSNNEADLLYSVVCSSQGTAIIDGLKTITYSEDPIPMDSHMDGNVAYCIPTDNGIKVVLATNLRDEYVNSLKLRTGYQINELSINQIDTAQVDTLGQGCITPPRHYPIDIAVDSTGIPQSFVFDCTIPEYLQSSMDTNPATCTSFPEVETVKLVIVYSGVFSSSVKHTIAMRGRTKGPCSGLANTECELLPQVNGLDKGIRYTIKDIYFSNLFKNTPGLSVRAYCTLPNIAETNTVTKELSKTMTRIKLRVPQNAPPETPHYDTEYMYKGVNRFYYYMSYTVLGVVVITILTMSIILCLKFRVKMKLSRQQMTSTGEGQQMLYIHAEV.

The first 18 residues, 1–18, serve as a signal peptide directing secretion; it reads MMRKYLILLILLPALAVG. A helical membrane pass occupies residues 1215 to 1235; that stretch reads SYTVLGVVVITILTMSIILCL.

Its subcellular location is the host membrane. This is an uncharacterized protein from Ostreid herpesvirus 1 (isolate France) (OsHV-1).